The following is a 131-amino-acid chain: Squamosa promoter-binding protein 1 (131 aa).

Residues 1 to 10 show a composition bias toward basic and acidic residues; that stretch reads MDTSKGEGKR. The tract at residues 1-52 is disordered; that stretch reads MDTSKGEGKRVIKLPGSQEQGEEEDDIGEDSKKTRALTPSGKRASGSTQRSC. The SBP-type zinc-finger motif lies at 49-126; the sequence is QRSCQVENCA…AGHNERRRKS (78 aa). C52, C57, C74, H77, C93, C96, H100, and C112 together coordinate Zn(2+). A Bipartite nuclear localization signal motif is present at residues 109–125; sequence KRSCRRRLAGHNERRRK.

The protein resides in the nucleus. In terms of biological role, probable transcriptional factor. Binds to the promoter of the SQUAMOSA gene. This is Squamosa promoter-binding protein 1 (SBP1) from Antirrhinum majus (Garden snapdragon).